The chain runs to 532 residues: Glucose-6-phosphate isomerase (532 aa).

The active-site Proton donor is the Glu-330. Active-site residues include His-359 and Lys-460.

It belongs to the GPI family.

It localises to the cytoplasm. It catalyses the reaction alpha-D-glucose 6-phosphate = beta-D-fructose 6-phosphate. It participates in carbohydrate biosynthesis; gluconeogenesis. It functions in the pathway carbohydrate degradation; glycolysis; D-glyceraldehyde 3-phosphate and glycerone phosphate from D-glucose: step 2/4. Its function is as follows. Catalyzes the reversible isomerization of glucose-6-phosphate to fructose-6-phosphate. This Prochlorococcus marinus (strain MIT 9211) protein is Glucose-6-phosphate isomerase.